The following is a 214-amino-acid chain: Thymidylate kinase (214 aa).

10–17 contacts ATP; it reads GPDGAGKT.

This sequence belongs to the thymidylate kinase family.

It carries out the reaction dTMP + ATP = dTDP + ADP. Its function is as follows. Phosphorylation of dTMP to form dTDP in both de novo and salvage pathways of dTTP synthesis. The polypeptide is Thymidylate kinase (Latilactobacillus sakei subsp. sakei (strain 23K) (Lactobacillus sakei subsp. sakei)).